A 559-amino-acid chain; its full sequence is Dihydroxy-acid dehydratase (559 aa).

Residue D81 participates in Mg(2+) binding. C122 contacts [2Fe-2S] cluster. Positions 123 and 124 each coordinate Mg(2+). At K124 the chain carries N6-carboxylysine. C195 contacts [2Fe-2S] cluster. E448 lines the Mg(2+) pocket. Residue S474 is the Proton acceptor of the active site.

This sequence belongs to the IlvD/Edd family. Homodimer. [2Fe-2S] cluster serves as cofactor. Mg(2+) is required as a cofactor.

It carries out the reaction (2R)-2,3-dihydroxy-3-methylbutanoate = 3-methyl-2-oxobutanoate + H2O. The enzyme catalyses (2R,3R)-2,3-dihydroxy-3-methylpentanoate = (S)-3-methyl-2-oxopentanoate + H2O. It functions in the pathway amino-acid biosynthesis; L-isoleucine biosynthesis; L-isoleucine from 2-oxobutanoate: step 3/4. It participates in amino-acid biosynthesis; L-valine biosynthesis; L-valine from pyruvate: step 3/4. In terms of biological role, functions in the biosynthesis of branched-chain amino acids. Catalyzes the dehydration of (2R,3R)-2,3-dihydroxy-3-methylpentanoate (2,3-dihydroxy-3-methylvalerate) into 2-oxo-3-methylpentanoate (2-oxo-3-methylvalerate) and of (2R)-2,3-dihydroxy-3-methylbutanoate (2,3-dihydroxyisovalerate) into 2-oxo-3-methylbutanoate (2-oxoisovalerate), the penultimate precursor to L-isoleucine and L-valine, respectively. In Geobacillus kaustophilus (strain HTA426), this protein is Dihydroxy-acid dehydratase.